The chain runs to 510 residues: Glycerol kinase (510 aa).

Threonine 12 serves as a coordination point for ADP. The ATP site is built by threonine 12, threonine 13, and serine 14. Sn-glycerol 3-phosphate is bound at residue threonine 12. Arginine 16 contacts ADP. Sn-glycerol 3-phosphate-binding residues include arginine 82, glutamate 83, and tyrosine 134. The glycerol site is built by arginine 82, glutamate 83, and tyrosine 134. A Phosphohistidine; by HPr modification is found at histidine 230. Aspartate 244 is a sn-glycerol 3-phosphate binding site. The glycerol site is built by aspartate 244 and glutamine 245. ADP contacts are provided by threonine 266 and glycine 309. Residues threonine 266, glycine 309, glutamine 313, and glycine 410 each contribute to the ATP site. 2 residues coordinate ADP: glycine 410 and asparagine 414.

Belongs to the FGGY kinase family. As to quaternary structure, homotetramer and homodimer (in equilibrium). The phosphoenolpyruvate-dependent sugar phosphotransferase system (PTS), including enzyme I, and histidine-containing protein (HPr) are required for the phosphorylation, which leads to the activation of the enzyme.

The catalysed reaction is glycerol + ATP = sn-glycerol 3-phosphate + ADP + H(+). It functions in the pathway polyol metabolism; glycerol degradation via glycerol kinase pathway; sn-glycerol 3-phosphate from glycerol: step 1/1. Its activity is regulated as follows. Activated by phosphorylation and inhibited by fructose 1,6-bisphosphate (FBP). Its function is as follows. Key enzyme in the regulation of glycerol uptake and metabolism. Catalyzes the phosphorylation of glycerol to yield sn-glycerol 3-phosphate. The chain is Glycerol kinase from Bacillus cereus (strain ATCC 10987 / NRS 248).